The primary structure comprises 323 residues: Elongation factor P--(R)-beta-lysine ligase (323 aa).

Substrate is bound at residue 76-78 (SPE). Residues 100 to 102 (RNE) and Asn-109 contribute to the ATP site. Tyr-118 contacts substrate. Residue 242–243 (EL) coordinates ATP. Residue Glu-249 coordinates substrate. Gly-298 is an ATP binding site.

The protein belongs to the class-II aminoacyl-tRNA synthetase family. EpmA subfamily. Homodimer.

It catalyses the reaction D-beta-lysine + L-lysyl-[protein] + ATP = N(6)-((3R)-3,6-diaminohexanoyl)-L-lysyl-[protein] + AMP + diphosphate + H(+). Functionally, with EpmB is involved in the beta-lysylation step of the post-translational modification of translation elongation factor P (EF-P). Catalyzes the ATP-dependent activation of (R)-beta-lysine produced by EpmB, forming a lysyl-adenylate, from which the beta-lysyl moiety is then transferred to the epsilon-amino group of a conserved specific lysine residue in EF-P. This chain is Elongation factor P--(R)-beta-lysine ligase, found in Pasteurella multocida (strain Pm70).